A 320-amino-acid chain; its full sequence is Sucrose operon repressor (320 aa).

The region spanning Met1–Ala55 is the HTH lacI-type domain. A DNA-binding region (H-T-H motif) is located at residues Ile4–Asn23.

In terms of biological role, negative regulator of scrB expression. In Staphylococcus xylosus, this protein is Sucrose operon repressor (scrR).